The chain runs to 199 residues: Transcription regulator complex subunit bur6 (199 aa).

The tract at residues 106 to 199 (PPIKAERKTK…SEASSASGDE (94 aa)) is disordered. The span at 112-121 (RKTKRPRARR) shows a compositional bias: basic residues. Residues 185-199 (SDKTTSEASSASGDE) show a composition bias toward polar residues.

This sequence belongs to the NC2 alpha/DRAP1 family.

The protein localises to the nucleus. Its function is as follows. Transcription regulator complex subunit that is essential for cell cycle progression. This chain is Transcription regulator complex subunit bur6, found in Schizosaccharomyces pombe (strain 972 / ATCC 24843) (Fission yeast).